A 235-amino-acid chain; its full sequence is Large ribosomal subunit protein uL1 (235 aa).

This sequence belongs to the universal ribosomal protein uL1 family. As to quaternary structure, part of the 50S ribosomal subunit.

In terms of biological role, binds directly to 23S rRNA. The L1 stalk is quite mobile in the ribosome, and is involved in E site tRNA release. Protein L1 is also a translational repressor protein, it controls the translation of the L11 operon by binding to its mRNA. The sequence is that of Large ribosomal subunit protein uL1 from Halothermothrix orenii (strain H 168 / OCM 544 / DSM 9562).